The following is an 89-amino-acid chain: Small ribosomal subunit protein uS15 (89 aa).

The protein belongs to the universal ribosomal protein uS15 family. As to quaternary structure, part of the 30S ribosomal subunit. Forms a bridge to the 50S subunit in the 70S ribosome, contacting the 23S rRNA.

In terms of biological role, one of the primary rRNA binding proteins, it binds directly to 16S rRNA where it helps nucleate assembly of the platform of the 30S subunit by binding and bridging several RNA helices of the 16S rRNA. Its function is as follows. Forms an intersubunit bridge (bridge B4) with the 23S rRNA of the 50S subunit in the ribosome. This chain is Small ribosomal subunit protein uS15, found in Thermomicrobium roseum (strain ATCC 27502 / DSM 5159 / P-2).